The chain runs to 143 residues: Large-conductance mechanosensitive channel (143 aa).

Transmembrane regions (helical) follow at residues F10 to G30, I40 to I60, and G86 to V106.

It belongs to the MscL family. Homopentamer.

Its subcellular location is the cell inner membrane. Channel that opens in response to stretch forces in the membrane lipid bilayer. May participate in the regulation of osmotic pressure changes within the cell. The protein is Large-conductance mechanosensitive channel of Acinetobacter baumannii (strain ATCC 17978 / DSM 105126 / CIP 53.77 / LMG 1025 / NCDC KC755 / 5377).